A 279-amino-acid polypeptide reads, in one-letter code: Putative biopolymer transport protein ExbB homolog (279 aa).

A run of 3 helical transmembrane segments spans residues 19–39 (SGGV…ITAL), 126–146 (IIEV…WYTF), and 162–182 (IYVA…LMPL).

Belongs to the ExbB/TolQ family.

Its subcellular location is the cell membrane. The polypeptide is Putative biopolymer transport protein ExbB homolog (Methanothermobacter thermautotrophicus (strain ATCC 29096 / DSM 1053 / JCM 10044 / NBRC 100330 / Delta H) (Methanobacterium thermoautotrophicum)).